A 248-amino-acid chain; its full sequence is Ubiquinone/menaquinone biosynthesis C-methyltransferase UbiE (248 aa).

S-adenosyl-L-methionine contacts are provided by serine 68 and aspartate 92.

The protein belongs to the class I-like SAM-binding methyltransferase superfamily. MenG/UbiE family.

It carries out the reaction a 2-demethylmenaquinol + S-adenosyl-L-methionine = a menaquinol + S-adenosyl-L-homocysteine + H(+). The enzyme catalyses a 2-methoxy-6-(all-trans-polyprenyl)benzene-1,4-diol + S-adenosyl-L-methionine = a 5-methoxy-2-methyl-3-(all-trans-polyprenyl)benzene-1,4-diol + S-adenosyl-L-homocysteine + H(+). It functions in the pathway quinol/quinone metabolism; menaquinone biosynthesis; menaquinol from 1,4-dihydroxy-2-naphthoate: step 2/2. Its pathway is cofactor biosynthesis; ubiquinone biosynthesis. Functionally, methyltransferase required for the conversion of demethylmenaquinol (DMKH2) to menaquinol (MKH2) and the conversion of 2-polyprenyl-6-methoxy-1,4-benzoquinol (DDMQH2) to 2-polyprenyl-3-methyl-6-methoxy-1,4-benzoquinol (DMQH2). This chain is Ubiquinone/menaquinone biosynthesis C-methyltransferase UbiE, found in Rickettsia bellii (strain RML369-C).